The sequence spans 1373 residues: DNA-directed RNA polymerase subunit beta'' (1373 aa).

Zn(2+)-binding residues include Cys220, Cys293, Cys300, and Cys303.

This sequence belongs to the RNA polymerase beta' chain family. RpoC2 subfamily. As to quaternary structure, in plastids the minimal PEP RNA polymerase catalytic core is composed of four subunits: alpha, beta, beta', and beta''. When a (nuclear-encoded) sigma factor is associated with the core the holoenzyme is formed, which can initiate transcription. Zn(2+) is required as a cofactor.

The protein localises to the plastid. The protein resides in the chloroplast. It catalyses the reaction RNA(n) + a ribonucleoside 5'-triphosphate = RNA(n+1) + diphosphate. Functionally, DNA-dependent RNA polymerase catalyzes the transcription of DNA into RNA using the four ribonucleoside triphosphates as substrates. In Lepidium virginicum (Virginia pepperweed), this protein is DNA-directed RNA polymerase subunit beta''.